The sequence spans 955 residues: Mediator of RNA polymerase II transcription subunit 16 (955 aa).

Belongs to the Mediator complex subunit 16 family. Component of the Mediator complex.

The protein resides in the nucleus. Component of the Mediator complex, a coactivator involved in the regulated transcription of nearly all RNA polymerase II-dependent genes. Mediator functions as a bridge to convey information from gene-specific regulatory proteins to the basal RNA polymerase II transcription machinery. Mediator is recruited to promoters by direct interactions with regulatory proteins and serves as a scaffold for the assembly of a functional preinitiation complex with RNA polymerase II and the general transcription factors. The chain is Mediator of RNA polymerase II transcription subunit 16 (sin4) from Neosartorya fischeri (strain ATCC 1020 / DSM 3700 / CBS 544.65 / FGSC A1164 / JCM 1740 / NRRL 181 / WB 181) (Aspergillus fischerianus).